Reading from the N-terminus, the 255-residue chain is Hydroxyacylglutathione hydrolase (255 aa).

Residues H55, H57, D59, H60, H113, D132, and H170 each contribute to the Zn(2+) site.

This sequence belongs to the metallo-beta-lactamase superfamily. Glyoxalase II family. Monomer. It depends on Zn(2+) as a cofactor.

It carries out the reaction an S-(2-hydroxyacyl)glutathione + H2O = a 2-hydroxy carboxylate + glutathione + H(+). It participates in secondary metabolite metabolism; methylglyoxal degradation; (R)-lactate from methylglyoxal: step 2/2. Its function is as follows. Thiolesterase that catalyzes the hydrolysis of S-D-lactoyl-glutathione to form glutathione and D-lactic acid. The polypeptide is Hydroxyacylglutathione hydrolase (Methylobacterium nodulans (strain LMG 21967 / CNCM I-2342 / ORS 2060)).